We begin with the raw amino-acid sequence, 252 residues long: Imidazole glycerol phosphate synthase subunit HisF (252 aa).

Residues Asp-11 and Asp-130 contribute to the active site.

Belongs to the HisA/HisF family. As to quaternary structure, heterodimer of HisH and HisF.

It is found in the cytoplasm. It catalyses the reaction 5-[(5-phospho-1-deoxy-D-ribulos-1-ylimino)methylamino]-1-(5-phospho-beta-D-ribosyl)imidazole-4-carboxamide + L-glutamine = D-erythro-1-(imidazol-4-yl)glycerol 3-phosphate + 5-amino-1-(5-phospho-beta-D-ribosyl)imidazole-4-carboxamide + L-glutamate + H(+). Its pathway is amino-acid biosynthesis; L-histidine biosynthesis; L-histidine from 5-phospho-alpha-D-ribose 1-diphosphate: step 5/9. Functionally, IGPS catalyzes the conversion of PRFAR and glutamine to IGP, AICAR and glutamate. The HisF subunit catalyzes the cyclization activity that produces IGP and AICAR from PRFAR using the ammonia provided by the HisH subunit. The chain is Imidazole glycerol phosphate synthase subunit HisF from Staphylococcus aureus (strain Mu3 / ATCC 700698).